Consider the following 507-residue polypeptide: Protein DETOXIFICATION 39 (507 aa).

12 consecutive transmembrane segments (helical) span residues 58 to 78 (VLFR…GMGI), 92 to 112 (LAAA…MLGM), 141 to 161 (IVLA…YPIL), 178 to 198 (IAGL…QKFL), 209 to 229 (FISA…VYVM), 233 to 253 (FMGI…SQCF), 287 to 307 (AVMI…AGLL), 318 to 338 (SICM…NAAV), 359 to 379 (WTAT…VIWF), 403 to 423 (FLAI…VAVG), 433 to 453 (VNVG…GFTF), and 459 to 479 (GIWT…LYVT).

Belongs to the multi antimicrobial extrusion (MATE) (TC 2.A.66.1) family.

It localises to the membrane. The protein is Protein DETOXIFICATION 39 of Arabidopsis thaliana (Mouse-ear cress).